The sequence spans 319 residues: Methionyl-tRNA formyltransferase (319 aa).

115-118 contributes to the (6S)-5,6,7,8-tetrahydrofolate binding site; the sequence is SLLP.

It belongs to the Fmt family.

It carries out the reaction L-methionyl-tRNA(fMet) + (6R)-10-formyltetrahydrofolate = N-formyl-L-methionyl-tRNA(fMet) + (6S)-5,6,7,8-tetrahydrofolate + H(+). In terms of biological role, attaches a formyl group to the free amino group of methionyl-tRNA(fMet). The formyl group appears to play a dual role in the initiator identity of N-formylmethionyl-tRNA by promoting its recognition by IF2 and preventing the misappropriation of this tRNA by the elongation apparatus. The polypeptide is Methionyl-tRNA formyltransferase (Lactococcus lactis subsp. lactis (strain IL1403) (Streptococcus lactis)).